The primary structure comprises 210 residues: Thioredoxin-like 3-1, chloroplastic (210 aa).

The region spanning 81–210 (WRLKAFWSNI…EVRELINKFV (130 aa)) is the Thioredoxin domain. Catalysis depends on nucleophile residues C130 and C133. C130 and C133 are oxidised to a cystine.

It belongs to the thioredoxin family.

Its subcellular location is the plastid. The protein localises to the chloroplast stroma. Probable thiol-disulfide oxidoreductase that may participate in various redox reactions. This chain is Thioredoxin-like 3-1, chloroplastic (WCRKC1), found in Arabidopsis thaliana (Mouse-ear cress).